The following is a 315-amino-acid chain: Tyrosine recombinase XerC (315 aa).

The Core-binding (CB) domain maps to Met1–Val103. The Tyr recombinase domain maps to Glu124 to Asp306. Catalysis depends on residues Arg164, Lys188, His258, Arg261, and His284. The active-site O-(3'-phospho-DNA)-tyrosine intermediate is the Tyr293.

It belongs to the 'phage' integrase family. XerC subfamily. Forms a cyclic heterotetrameric complex composed of two molecules of XerC and two molecules of XerD.

It is found in the cytoplasm. Its function is as follows. Site-specific tyrosine recombinase, which acts by catalyzing the cutting and rejoining of the recombining DNA molecules. The XerC-XerD complex is essential to convert dimers of the bacterial chromosome into monomers to permit their segregation at cell division. It also contributes to the segregational stability of plasmids. The chain is Tyrosine recombinase XerC from Chlamydia muridarum (strain MoPn / Nigg).